A 198-amino-acid polypeptide reads, in one-letter code: dTTP/UTP pyrophosphatase (198 aa).

Catalysis depends on D76, which acts as the Proton acceptor.

Belongs to the Maf family. YhdE subfamily. Requires a divalent metal cation as cofactor.

It is found in the cytoplasm. It carries out the reaction dTTP + H2O = dTMP + diphosphate + H(+). The catalysed reaction is UTP + H2O = UMP + diphosphate + H(+). Nucleoside triphosphate pyrophosphatase that hydrolyzes dTTP and UTP. May have a dual role in cell division arrest and in preventing the incorporation of modified nucleotides into cellular nucleic acids. This chain is dTTP/UTP pyrophosphatase, found in Shewanella denitrificans (strain OS217 / ATCC BAA-1090 / DSM 15013).